A 427-amino-acid chain; its full sequence is MLRKLWRRKLFSFPTKYYFLFLAFSVVTFTVLRIHQKTEFVNFGHLELFEENPSSNINCTKILQGDVDEIQKVKLESLTVKFKKRARWTNYDYINMTGDCASFIKKRKYITEPLSKEEAGFPIAYSIVVHHKIEMLDRLLRAIYMPQNFYCIHVDAKSEKSFLAAAVGIASCFSNVFVASQLESVVYASWSRVQADLNCMQDLYQMNAGWKYLINLCGMDFPIKTNLEIVRKLKLLMGENNLETEKMPSHKKERWKKHYEVVNGKLTNMGTDKIHPPLETPLFSGSAHFVVSREYVEYVLQNQNIQKFMEWAKDTYSPDEYLWATIQRIPEVPGSLSLSYKYDTSDMQAIARFVKWQYFEGDVSKGAPYPPCSVHVRSVCVFGAGDLNWLLHVHHLFANKFDTDIDLFAIQCLDEHLRHKALETLKP.

Residues 1-9 (MLRKLWRRK) are Cytoplasmic-facing. The mediates interaction with GOLPH3 and is necessary and sufficient for localization to the Golgi stretch occupies residues 5–9 (LWRRK). A helical; Signal-anchor for type II membrane protein transmembrane segment spans residues 10 to 32 (LFSFPTKYYFLFLAFSVVTFTVL). A stem region region spans residues 33–121 (RIHQKTEFVN…EPLSKEEAGF (89 aa)). Residues 33–427 (RIHQKTEFVN…RHKALETLKP (395 aa)) are Lumenal-facing. N-linked (GlcNAc...) asparagine glycosylation is found at asparagine 58 and asparagine 95. 4 cysteine pairs are disulfide-bonded: cysteine 59–cysteine 412, cysteine 100–cysteine 172, cysteine 151–cysteine 199, and cysteine 372–cysteine 380. The catalytic stretch occupies residues 122–427 (PIAYSIVVHH…RHKALETLKP (306 aa)). UDP-N-acetyl-alpha-D-glucosamine-binding positions include 128 to 130 (VVH), 155 to 157 (DAK), and tyrosine 187. A glycoprotein is bound by residues glutamate 243, lysine 251, arginine 254, glutamate 320, lysine 341, and tyrosine 358. Catalysis depends on glutamate 320, which acts as the Nucleophile. Residues arginine 377 and lysine 400 each contribute to the UDP-N-acetyl-alpha-D-glucosamine site.

The protein belongs to the glycosyltransferase 14 family. In terms of assembly, interacts with GOLPH3; may control GCNT1 retention in the Golgi. As to expression, expressed in tracheal submucosal glands and epithelium (at protein level).

The protein resides in the golgi apparatus membrane. The catalysed reaction is a 3-O-[beta-D-galactosyl-(1-&gt;3)-N-acetyl-alpha-D-galactosaminyl]-L-seryl-[protein] + UDP-N-acetyl-alpha-D-glucosamine = 3-O-{beta-D-galactosyl-(1-&gt;3)-[N-acetyl-beta-D-glucosaminyl-(1-&gt;6)]-N-acetyl-alpha-D-galactosaminyl}-L-seryl-[protein] + UDP + H(+). The enzyme catalyses a 3-O-[beta-D-galactosyl-(1-&gt;3)-N-acetyl-alpha-D-galactosaminyl]-L-threonyl-[protein] + UDP-N-acetyl-alpha-D-glucosamine = a 3-O-{beta-D-galactosyl-(1-&gt;3)-[N-acetyl-beta-D-glucosaminyl-(1-&gt;6)]-N-acetyl-alpha-D-galactosaminyl}-L-threonyl-[protein] + UDP + H(+). It carries out the reaction a globoside GalGb4Cer + UDP-N-acetyl-alpha-D-glucosamine = a globoside GlcNAc-(beta1-&gt;6)-GalGb4Cer + UDP + H(+). It catalyses the reaction a ganglioside GA1 + UDP-N-acetyl-alpha-D-glucosamine = a ganglioside beta-D-GlcNAc-(1-&gt;6)-GA1 + UDP + H(+). It participates in protein modification; protein glycosylation. The protein operates within glycolipid biosynthesis. In terms of biological role, glycosyltransferase that catalyzes the transfer of an N-acetylglucosamine (GlcNAc) moiety in beta1-6 linkage from UDP-GlcNAc onto mucin-type core 1 O-glycan to form the branched mucin-type core 2 O-glycan. The catalysis is metal ion-independent and occurs with inversion of the anomeric configuration of sugar donor. Selectively involved in synthesis of mucin-type core 2 O-glycans that serve as scaffolds for the display of selectin ligand sialyl Lewis X epitope by myeloid cells, with an impact on homeostasis and recruitment to inflammatory sites. Can also act on glycolipid substrates. Transfers GlcNAc moiety to GalGb4Cer globosides in a reaction step to the synthesis of stage-specific embryonic antigen 1 (SSEA-1) determinant. Can use Galbeta1-3GalNAcalpha1- and Galbeta1-3GalNAcbeta1- oligosaccharide derivatives as acceptor substrates. This Bos taurus (Bovine) protein is Beta-1,3-galactosyl-O-glycosyl-glycoprotein beta-1,6-N-acetylglucosaminyltransferase (GCNT1).